Reading from the N-terminus, the 231-residue chain is Enolase-phosphatase E1 (231 aa).

It belongs to the HAD-like hydrolase superfamily. MasA/MtnC family. In terms of assembly, monomer. Mg(2+) serves as cofactor.

It catalyses the reaction 5-methylsulfanyl-2,3-dioxopentyl phosphate + H2O = 1,2-dihydroxy-5-(methylsulfanyl)pent-1-en-3-one + phosphate. It functions in the pathway amino-acid biosynthesis; L-methionine biosynthesis via salvage pathway; L-methionine from S-methyl-5-thio-alpha-D-ribose 1-phosphate: step 3/6. The protein operates within amino-acid biosynthesis; L-methionine biosynthesis via salvage pathway; L-methionine from S-methyl-5-thio-alpha-D-ribose 1-phosphate: step 4/6. Functionally, bifunctional enzyme that catalyzes the enolization of 2,3-diketo-5-methylthiopentyl-1-phosphate (DK-MTP-1-P) into the intermediate 2-hydroxy-3-keto-5-methylthiopentenyl-1-phosphate (HK-MTPenyl-1-P), which is then dephosphorylated to form the acireductone 1,2-dihydroxy-3-keto-5-methylthiopentene (DHK-MTPene). The protein is Enolase-phosphatase E1 of Stenotrophomonas maltophilia (strain K279a).